Here is a 1206-residue protein sequence, read N- to C-terminus: DNA-directed RNA polymerase subunit beta' (1206 aa).

Positions 60, 62, 75, and 78 each coordinate Zn(2+). Mg(2+) is bound by residues Asp449, Asp451, and Asp453. Zn(2+) is bound by residues Cys818, Cys892, Cys899, and Cys902.

This sequence belongs to the RNA polymerase beta' chain family. In terms of assembly, the RNAP catalytic core consists of 2 alpha, 1 beta, 1 beta' and 1 omega subunit. When a sigma factor is associated with the core the holoenzyme is formed, which can initiate transcription. The cofactor is Mg(2+). Zn(2+) serves as cofactor.

The catalysed reaction is RNA(n) + a ribonucleoside 5'-triphosphate = RNA(n+1) + diphosphate. DNA-dependent RNA polymerase catalyzes the transcription of DNA into RNA using the four ribonucleoside triphosphates as substrates. The chain is DNA-directed RNA polymerase subunit beta' from Shouchella clausii (strain KSM-K16) (Alkalihalobacillus clausii).